A 332-amino-acid polypeptide reads, in one-letter code: Arabinogalactan endo-beta-1,4-galactanase (332 aa).

N111 carries N-linked (GlcNAc...) asparagine glycosylation. Residue E135 is the Proton donor of the active site. The Nucleophile role is filled by E245.

This sequence belongs to the glycosyl hydrolase 53 family.

It catalyses the reaction The enzyme specifically hydrolyzes (1-&gt;4)-beta-D-galactosidic linkages in type I arabinogalactans.. In Thermothelomyces thermophilus (Myceliophthora thermophila), this protein is Arabinogalactan endo-beta-1,4-galactanase.